A 281-amino-acid chain; its full sequence is Lipoyl synthase (281 aa).

[4Fe-4S] cluster-binding residues include cysteine 37, cysteine 42, cysteine 48, cysteine 63, cysteine 67, cysteine 70, and serine 274. Residues 49–263 (WSRGTATFMI…RQQAVNKGFK (215 aa)) enclose the Radical SAM core domain.

Belongs to the radical SAM superfamily. Lipoyl synthase family. The cofactor is [4Fe-4S] cluster.

It localises to the cytoplasm. The enzyme catalyses [[Fe-S] cluster scaffold protein carrying a second [4Fe-4S](2+) cluster] + N(6)-octanoyl-L-lysyl-[protein] + 2 oxidized [2Fe-2S]-[ferredoxin] + 2 S-adenosyl-L-methionine + 4 H(+) = [[Fe-S] cluster scaffold protein] + N(6)-[(R)-dihydrolipoyl]-L-lysyl-[protein] + 4 Fe(3+) + 2 hydrogen sulfide + 2 5'-deoxyadenosine + 2 L-methionine + 2 reduced [2Fe-2S]-[ferredoxin]. The protein operates within protein modification; protein lipoylation via endogenous pathway; protein N(6)-(lipoyl)lysine from octanoyl-[acyl-carrier-protein]: step 2/2. Functionally, catalyzes the radical-mediated insertion of two sulfur atoms into the C-6 and C-8 positions of the octanoyl moiety bound to the lipoyl domains of lipoate-dependent enzymes, thereby converting the octanoylated domains into lipoylated derivatives. This Parabacteroides distasonis (strain ATCC 8503 / DSM 20701 / CIP 104284 / JCM 5825 / NCTC 11152) protein is Lipoyl synthase.